A 650-amino-acid chain; its full sequence is Acetoacetyl-coenzyme A synthetase (650 aa).

199–202 (YNGK) contacts CoA. Residues 392 to 394 (GSP), Asp-504, Arg-519, and Arg-530 contribute to the ATP site. Val-546 lines the Mg(2+) pocket. Arg-587 provides a ligand contact to CoA. N6-acetyllysine is present on Lys-612.

Belongs to the ATP-dependent AMP-binding enzyme family. Requires Mg(2+) as cofactor. Post-translationally, acetylated. Deacetylation by the SIR2-homolog deacetylase activates the enzyme.

The catalysed reaction is acetoacetate + ATP + CoA = acetoacetyl-CoA + AMP + diphosphate. It functions in the pathway biopolymer metabolism; poly-(R)-3-hydroxybutanoate degradation. Catalyzes the conversion of acetoacetate into acetoacetyl-CoA. Is involved in poly-3-hydroxybutyrate (PHB) degradation, which allows growth of R.meliloti on PHB cycle intermediates. The protein is Acetoacetyl-coenzyme A synthetase of Rhizobium meliloti (strain 1021) (Ensifer meliloti).